The primary structure comprises 459 residues: Cysteine--tRNA ligase (459 aa).

Residue C28 participates in Zn(2+) binding. The 'HIGH' region motif lies at 30-40; that stretch reads VTIYDLCHIGH. The Zn(2+) site is built by C209, H234, and E238. Positions 266 to 270 match the 'KMSKS' region motif; that stretch reads KMSKS. K269 is an ATP binding site.

The protein belongs to the class-I aminoacyl-tRNA synthetase family. As to quaternary structure, monomer. It depends on Zn(2+) as a cofactor.

It localises to the cytoplasm. It catalyses the reaction tRNA(Cys) + L-cysteine + ATP = L-cysteinyl-tRNA(Cys) + AMP + diphosphate. The protein is Cysteine--tRNA ligase of Shewanella amazonensis (strain ATCC BAA-1098 / SB2B).